The chain runs to 108 residues: uncharacterized protein (108 aa).

This is an uncharacterized protein from Mycoplasma pneumoniae (strain ATCC 29342 / M129 / Subtype 1) (Mycoplasmoides pneumoniae).